Here is a 408-residue protein sequence, read N- to C-terminus: Protein ZNF365 (408 aa).

Ser16 bears the Phosphoserine mark. A C2H2-type; degenerate zinc finger spans residues 26-51 (FRCPRCGDHTRFRSLSSLRAHLEFSH). Ser139 and Ser146 each carry phosphoserine. Residues 170–298 (VEAVDRTIEK…QLEYYQSQQA (129 aa)) adopt a coiled-coil conformation. Thr176 is modified (phosphothreonine). At Ser370 the chain carries Phosphoserine.

In terms of assembly, homodimer. Interacts with NDE1 and NDEL1. Interacts with DISC1. Interacts with PARP1. Interacts with MCRS1. As to expression, detected in several tissues, with highest levels in brain. Also expressed during embryonic development. Expressed in cerebral cortex, hippocampus, striatum, inferior colliculus and thalamus.

It is found in the cytoplasm. The protein localises to the cytoskeleton. The protein resides in the microtubule organizing center. It localises to the centrosome. In terms of biological role, contributes to genomic stability by preventing telomere dysfunction. Involved in the morphogenesis of basket cells in the somatosensory cortex during embryogenesis. Involved in the positive regulation of oligodendrocyte differentiation during postnatal growth. Involved in dendritic arborization, morphogenesis of spine density dendrite, and establishment of postsynaptic dendrite density in cortical pyramidal neurons. Involved in the regulation of neurogenesis. Negatively regulates neurite outgrowth. Involved in homologous recombination (HR) repair pathway. Required for proper resolution of DNA double-strand breaks (DSBs) by HR. Is required for recovery of stalled replication forks, and directly contributes to genomic stability. Interacts with PARP1 and mediates MRE11-dependent DNA end resection during replication fork recovery. This Mus musculus (Mouse) protein is Protein ZNF365 (Znf365).